The primary structure comprises 263 residues: UPF0758 protein NGR_c13970 (263 aa).

One can recognise an MPN domain in the interval 141-263 (VLSSWSAVID…HVSMKGLRLF (123 aa)). Residues H212, H214, and D225 each contribute to the Zn(2+) site. A JAMM motif motif is present at residues 212-225 (HNHPSGDPTPSRAD).

Belongs to the UPF0758 family.

The polypeptide is UPF0758 protein NGR_c13970 (Sinorhizobium fredii (strain NBRC 101917 / NGR234)).